The primary structure comprises 435 residues: Hexane cyclase xenF (435 aa).

A signal peptide spans Met1 to Ala23. N-linked (GlcNAc...) asparagine glycosylation is found at Asn81 and Asn156.

The protein belongs to the Diels-Alderase family.

The protein operates within mycotoxin biosynthesis. Its function is as follows. Hexane cyclase; part of the gene cluster that mediates the biosynthesis of xenoacremones such as xenoacremone A, a compound that shows inhibitory activity toward the PI3K/AKT signaling pathway and which has the ability to induce apoptosis of A549 lung cancer cells. Within the pathway, cooperation of the hybrid PKS-NRPS xenE and the trans-acting enoyl reductase xenG is responsible for the formation of the reduced tyrosine-nonaketide derivative. The alpha/beta hydrolase xenA then accelerates intramolecular nucleophilic attack to give a pyrrolidone derivative. Subsequently, three enzymes, xenF, xenD, and xenC, coordinately participate in the conversion to xenoacremone B. XenF catalyzes sigmatropic rearrangement to form an A-ring, which leads to an unusual intermediate with a hexane ring, which is required for the formation of the tricarbocyclic product. Epoxidation catalyzed by xenD and the formation of the paracyclophane ether catalyzed by xenC initiate a spontaneous intramolecular Diels-Alder (IMDA) reaction to yield xenoacremone B. Spontaneous hydration of xenoacremone B leads to the formation of xenoacremone A, which undergoes subsequent methylation to afford xenoacremone C. The polypeptide is Hexane cyclase xenF (Xenoacremonium sinensis (Endophyte fungus)).